The primary structure comprises 349 residues: MKFNLIIEQLDELIQSHSLTTNPDCNPDITQLAPLDEALSGHLSFIEGDKFASMIAKTNASALILPLNETLQTQATQQGIAWIATANPRLLFAHTIRLFYQPFRPSPGIHPTAVIDPDAQLGENVSIGANVVIQAGVKLGNEVCIHPNVVIYPGVTLGDRTILHGNCTIHERTVIGADCVIHSGAVIGSEGFGFVPTAEGWFKTEQSGITVLEDGVEVGCNSTIDRPAVGETRVKRNTKIDNLTHIAHGCQIGENCAFAAQVGLAGGVKVGNRVILAGQVGVANQAKIGDGAIASAQTGIPNDVAAGEIVSGSPCVPNKLYLKVSAIYKRLPEMYQALKQIQKQLEKNS.

His248 acts as the Proton acceptor in catalysis.

The protein belongs to the transferase hexapeptide repeat family. LpxD subfamily. As to quaternary structure, homotrimer.

It carries out the reaction a UDP-3-O-[(3R)-3-hydroxyacyl]-alpha-D-glucosamine + a (3R)-hydroxyacyl-[ACP] = a UDP-2-N,3-O-bis[(3R)-3-hydroxyacyl]-alpha-D-glucosamine + holo-[ACP] + H(+). It functions in the pathway bacterial outer membrane biogenesis; LPS lipid A biosynthesis. Its function is as follows. Catalyzes the N-acylation of UDP-3-O-acylglucosamine using 3-hydroxyacyl-ACP as the acyl donor. Is involved in the biosynthesis of lipid A, a phosphorylated glycolipid that anchors the lipopolysaccharide to the outer membrane of the cell. The chain is UDP-3-O-acylglucosamine N-acyltransferase from Gloeothece citriformis (strain PCC 7424) (Cyanothece sp. (strain PCC 7424)).